Reading from the N-terminus, the 419-residue chain is Creatine kinase S-type, mitochondrial (419 aa).

A mitochondrion-targeting transit peptide spans 1 to 39 (MASAFSKLLTGRNASLLFTTLGTSALTTGYLLNRQKVSA). The interval 40–64 (DAREQHKLFPPSADYPDLRKHNNCM) is cardiolipin-binding. Residues 46 to 132 (KLFPPSADYP…FDPVIKLRHN (87 aa)) form the Phosphagen kinase N-terminal domain. Residues 159–401 (YVLSSRVRTG…NYLVDCEKKL (243 aa)) enclose the Phosphagen kinase C-terminal domain. ATP contacts are provided by residues 162–166 (SSRVR) and H225. Phosphotyrosine is present on Y255. ATP-binding positions include R270, R326, 354–359 (RGTGGV), and D369. A Phosphothreonine modification is found at T356.

This sequence belongs to the ATP:guanido phosphotransferase family. In terms of assembly, exists as an octamer composed of four CKMT2 homodimers. Sarcomere-specific. Found only in heart and skeletal muscles.

The protein localises to the mitochondrion inner membrane. It catalyses the reaction creatine + ATP = N-phosphocreatine + ADP + H(+). In terms of biological role, reversibly catalyzes the transfer of phosphate between ATP and various phosphogens (e.g. creatine phosphate). Creatine kinase isoenzymes play a central role in energy transduction in tissues with large, fluctuating energy demands, such as skeletal muscle, heart, brain and spermatozoa. This chain is Creatine kinase S-type, mitochondrial (Ckmt2), found in Rattus norvegicus (Rat).